A 155-amino-acid polypeptide reads, in one-letter code: Small ribosomal subunit protein uS7cz/uS7cy (155 aa).

Belongs to the universal ribosomal protein uS7 family. In terms of assembly, part of the 30S ribosomal subunit.

The protein localises to the plastid. It is found in the chloroplast. In terms of biological role, one of the primary rRNA binding proteins, it binds directly to 16S rRNA where it nucleates assembly of the head domain of the 30S subunit. This chain is Small ribosomal subunit protein uS7cz/uS7cy (rps7-A), found in Anthoceros angustus (Hornwort).